We begin with the raw amino-acid sequence, 1779 residues long: 5-methyl-1-naphthoate synthase (1779 aa).

One can recognise a Ketosynthase family 3 (KS3) domain in the interval 10–433; it reads VEPLAVIGMS…GSIAHAVLQQ (424 aa). Residues C181, H316, and H356 each act as for beta-ketoacyl synthase activity in the active site. The tract at residues 902–1027 is N-terminal hotdog fold; it reads HTLIGARTTV…ATVVHEPEVG (126 aa). The region spanning 902-1180 is the PKS/mFAS DH domain; it reads HTLIGARTTV…YVKVQDIGSG (279 aa). Residues 1042 to 1180 form a C-terminal hotdog fold region; that stretch reads PVSWTWAKVD…YVKVQDIGSG (139 aa). Residues 1664–1742 form the Carrier domain; it reads GELPELVLKV…ALAEFLAAEV (79 aa). At S1702 the chain carries O-(pantetheine 4'-phosphoryl)serine. Residues 1746-1771 are disordered; the sequence is TADAEETDPVAGLPAPQQGSGTAEQL.

The enzyme catalyses 5 malonyl-CoA + acetyl-CoA + 3 NADPH + 7 H(+) = 5-methyl-1-naphthoate + 5 CO2 + 3 NADP(+) + 6 CoA + 4 H2O. Its pathway is antibiotic biosynthesis. Functionally, polyketide synthase that catalyzes the biosynthesis of the bicyclic aromatic compound 5-methyl-1-naphthoate in the biosynthesis of the antitumor antibiotic azinomycin B. In Streptomyces sahachiroi, this protein is 5-methyl-1-naphthoate synthase.